A 206-amino-acid chain; its full sequence is LexA repressor (206 aa).

The H-T-H motif DNA-binding region spans 28–48 (RAEIARELGFRSANAAEEHLK). Active-site for autocatalytic cleavage activity residues include S123 and K160.

Belongs to the peptidase S24 family. In terms of assembly, homodimer.

It carries out the reaction Hydrolysis of Ala-|-Gly bond in repressor LexA.. In terms of biological role, represses a number of genes involved in the response to DNA damage (SOS response), including recA and lexA. In the presence of single-stranded DNA, RecA interacts with LexA causing an autocatalytic cleavage which disrupts the DNA-binding part of LexA, leading to derepression of the SOS regulon and eventually DNA repair. The sequence is that of LexA repressor from Vibrio atlanticus (strain LGP32) (Vibrio splendidus (strain Mel32)).